Here is a 257-residue protein sequence, read N- to C-terminus: Flavodoxin/ferredoxin--NADP reductase (257 aa).

Residues 2–110 enclose the FAD-binding FR-type domain; sequence NPWINANVLK…EKSFGFFTLD (109 aa). Residues 59 to 62, Y75, 83 to 85, and T125 contribute to the FAD site; these read RAYS and KLS. NADP(+)-binding positions include 152–153, 182–183, R193, 223–225, and D229; these read VR, SR, and NPA. Residue 256 to 257 participates in FAD binding; that stretch reads YW.

It belongs to the ferredoxin--NADP reductase type 1 family. Requires FAD as cofactor.

The protein resides in the cytoplasm. It catalyses the reaction 2 reduced [2Fe-2S]-[ferredoxin] + NADP(+) + H(+) = 2 oxidized [2Fe-2S]-[ferredoxin] + NADPH. The enzyme catalyses reduced [flavodoxin] + NADP(+) = oxidized [flavodoxin] + NADPH + 2 H(+). Transports electrons between flavodoxin or ferredoxin and NADPH. In Buchnera aphidicola subsp. Schizaphis graminum (strain Sg), this protein is Flavodoxin/ferredoxin--NADP reductase (fpr).